Reading from the N-terminus, the 501-residue chain is Glycerol kinase (501 aa).

Position 14 (T14) interacts with ADP. ATP-binding residues include T14, T15, and S16. Residue T14 coordinates sn-glycerol 3-phosphate. R18 serves as a coordination point for ADP. R84, E85, Y135, and D244 together coordinate sn-glycerol 3-phosphate. Glycerol contacts are provided by R84, E85, Y135, D244, and Q245. ADP is bound by residues T266 and G309. Residues T266, G309, Q313, and G410 each coordinate ATP. 2 residues coordinate ADP: G410 and N414.

Belongs to the FGGY kinase family.

It carries out the reaction glycerol + ATP = sn-glycerol 3-phosphate + ADP + H(+). The protein operates within polyol metabolism; glycerol degradation via glycerol kinase pathway; sn-glycerol 3-phosphate from glycerol: step 1/1. Its activity is regulated as follows. Inhibited by fructose 1,6-bisphosphate (FBP). In terms of biological role, key enzyme in the regulation of glycerol uptake and metabolism. Catalyzes the phosphorylation of glycerol to yield sn-glycerol 3-phosphate. The protein is Glycerol kinase of Deinococcus radiodurans (strain ATCC 13939 / DSM 20539 / JCM 16871 / CCUG 27074 / LMG 4051 / NBRC 15346 / NCIMB 9279 / VKM B-1422 / R1).